Here is a 235-residue protein sequence, read N- to C-terminus: Ribonuclease HII (235 aa).

In terms of domain architecture, RNase H type-2 spans 23–212 (GLVAGVDEAG…VAHVVSIARM (190 aa)). Residues D29, E30, and D121 each coordinate a divalent metal cation.

Belongs to the RNase HII family. It depends on Mn(2+) as a cofactor. Requires Mg(2+) as cofactor.

It localises to the cytoplasm. The catalysed reaction is Endonucleolytic cleavage to 5'-phosphomonoester.. Functionally, endonuclease that specifically degrades the RNA of RNA-DNA hybrids. This Delftia acidovorans (strain DSM 14801 / SPH-1) protein is Ribonuclease HII.